The following is a 4467-amino-acid chain: MRGINAIVGFLLCFCLLHRINTAVQFKQEILEEGKSAGYVVLSLPLPPSNEIYTFFQAQDSGSRDALLLFQISESGVIKTTKPITYEIGQKNYYDLVAIRRQRGEKVGGIPTSIRIVIKDTNNFSPTFPQHLYYGRVKERSPDNTVVMGLENCFAEDRDTGGIQSYSISSGNDKGYFKTSMTTVNDRKFLVLKTTNVPILIDTTPEINLTVRAYDGANSATTGITVKIIDENDNSPVFEKKSYATTVNEDTPLLTSVLRVRATDKDLGTNGGVYYYLNGAQYFSVDAITGVIKVVRQLPDQPRIVLDVKATDRGTPSKTASVQVTIDINGIPDYPPPDSSNPGVNTVPVFQEESYTASVREDFPINAALLVIHAIDRDPPGRNRQIRYSLSSSGTFEIDQFSGVVKLVGRLNYDSKKQYNLFVRATDQALTPLVASASLKVTVQEVDKNRNTPVFSPANPQQRMVSIKENMPASTQVGSLITATDADGNQGPDGQIAYSIFSGSGLPYFQINKDTGRLETVIRLDRERQSQYDLIVEARDKALYPLFSHVYLMINIDPEEDNNPDFSKVVYTANVPEKAPRDTFVTVIHATDRDGASVSYSIQNAGSAFAIRAETGVIVTARVLDASIGDTDFTLFVTASAGTKKSESQINVTIVSKQDSPPTFKNAPYSVTVPENLGKIDNLLCIAAYGVRGTAVSYSIASAAVGKFAVDIDSGRFSATSSFDYEQVLGGEYPVQVQASTSPQQVATAGITVRVTDDKDPPTFSRSSYTFDIDENTPGGTTILPKNADGSSGGLLISDEDTAITQFDCTIENVPGNVFDHFRVVNPDNSVRECKLVTVRGFNFVENPSFQFEVRATDRNYRNMFASAQVKVVIKDTNNHSPEFSQTSYWASVGRDYPTGNSILKVTATDQDSGSFGEITYELLNTQDRSRFSLDSNTGVLSFPNSLPARRYQLRVQASDRAQKSNEIRRTEVDVFVTVYLPGTGIIVFDPPLFPKAIREDITINTQVKLVSTRGASNIKYSIVGGNTNNAFRIGSNNGQILVQKALDRETQSKYTLVIRAEESTSNVATEANFIISVTDVNDNPPRITFMEAQPKNIAIEDFSPPGSPVIRVIATDPDTGAAAAIKYSITIGTPFSINEDNGLITAAREIRKTERSTWDLTVTARDSGTPSRNSAPYRLRIHVTDGLQAPQLQPRFSVNVNENEQVGNVVKDISPVQKNPNFKYSILSGNRDDAFCINHAGMISVAKPLDREKVNSYILRVSASVGNKISNSTVSVTIADQNDDAPQFSRTVYTFEVREDLPQGREVGRVFAIDRDDGTNGQVSYSLLYTVDVNSKFTVDGATGAVVTGSVLDFEEIRQHILYVKAEDKGRPLRTSIAKVIVNVKDVNDRSPKFSADSYVTKVSLDEVIGTQVLLVSATDLDSGDNSVVVYNITAGNEEGAFEIDPDTGAIKVKKSLTTVSASKFSLRVEAKDKGNPPRMTPTTVQLNIFLPDGPPKFVVKPVVEERFEGIAANGRVMVVKAATSEALTYEIISGNEDGLFRIEPTTGEIKVTRVLDYEEASEHRLVVRVMDTRDRSDRVTVILKVKNINDNEPQFPGESNGFVERKVEDDFQIGDAAARLSAYDKDAGDSISYQLSANALPLFSIDNEGFLIAKKPRSEIQSPVKFELVAKDNGVPQRQTTVQVRLVFVSYRGDQQPVRVYVREDKEVGSVIARVPRFFPGGTLSIIFPQKANFTVDNSGRIRMTTAFDFEQSQFYRLTVREQEPAPGRRTNDIDVEINVVDVNDNKPKFTMIDFFGRVNTNSRPGTSAYQLKAEDKDGGLSGTVGYQMLSRDVPFGINPISGVVETDATLQDRGGYNITVFPFDFGVPREFGAAVSLDIKTVNFKPQFSESAYRFQVFENAPPGVIVGEVNATSLSGARLGFSVPLGDPSKKFEVHNSGEIRLNSRLDHEKQSIYNLKVRATELIPGGYSNEVEVQVTVTNANEYYPKFEPNLYFKVVNENVAAGQSVLRVTAIDKDCGTTSKCEAGLLKFSVEGTSLFKIDPRTGDVSVGSTPLDYEKQREHVFTVVVEDFGEKIYKSRGFVTIDVRNTDDEKPQFLESDYTISIAEDAETGRPLAAILARDADGDPVKYSITSGDSGGIFQINPTTGVLSLKSSIKGNPRTQYTLQVKASNSAQDSRFDEVRVVVNIEDSNDNRPVFTDCPPEVPVEENKPRGHRVYQVVAQDTKDRGRNKEIEYFLVTGGERLFEIDNTTGVIKTLTSLDRETKDQHTLIIMAEDGGHGRNSAERLLSYCILDVKVVDQNDNFPFFLTRTYYASVWQGAPVNTEVLTVRAADMDTRVNANIDNSEVQYQLVNADDKFQVELATGVIKTKATLVSFVGKVQLQIRAINKQPMAISEERPRTSTTTVEINVEKDKPPAFAPSAVYKSAINEDVKIGKEVQQILAISQVDRKNKIVYSFVKSNPEGEQKFQIDPATGNITTASTLDYEQVKEYRLQFRATDIATNLYATCVVIISLIDVNDDTPTFKLEEYTARVPENAAVDFNVITIEADDRDTALSGQVGYTLEVSDSSEGQFFAINGQTGVMITKKSFDREDPKHIPKYNVFAVATDKGVPPLAAKVTISVAIVDQNDQPPIFPKPSYEVSVQEDAGIGTSVGEFTATDADIGDNARLDYFISSGDASHIFKMESVYGDNNFGILILAGKLDFETKKTYNISITATDRKDSATVPVVVNVLDTNDNIPKFDNLIYEAIIPENSPPGQRVETVSATDLDSPKIQNDLRYSLDADGQKNFAVDAVSGLITTANQRLDREVNPVVTFTAFAFDGKHRGEALIRVTLRDVNDNSPYFPNPPYVGYVEENLDPGASVMVIQAFDLDSGIDGEIVYSLDDSSNNKFKIDRISGLVTTVETMEKETAVNSFTIVVKATDKGSPALSGTVTATIRVSDGNDQAPVFNPREYRQKVPEDSPPGFLVTQVKATDQDEGYNAELEFTITAGNDPYQFYIDPKTGEILVSGMLDFDHGKKSYNLTVMVSDRGVPPKQAAKPAFVYITIVDSNDNPPVFVPAEYSIKVTEGTKPGDTVQLVTAVDQDTGTNALFTFGIADGDDADMFGIRPDPKNSSIGFIYTVLQLDRETVPQYNLTVTATDTGGLQGVAVVRITVLDTNDNGPWFQPRYYEGSITVTSDSNSQQEITTVKVFDPDEPSNGPPFSFSIESTKPATDATRFGLRKDPKEPQTANEVYSIGAFTRQVPEWELTIKAIDSGKPVAMFNSTLVFVWVVDDKNLNEPFDGALTIIVNAYDDKFAGGIIGKAYYQDVDYMGDENTYSMSEQEYFTLGELTGDISAAANIPVGLYKFEIEVLEQRLRPNTNTFKTVTSSVSVIVQSVPRAAILQSVAVQILAYRRPALFVADIYTNFRQKLAGIFGVQEADILIFSVQRAPSKRVPLADVFGVEIQLAVRSSGSSFMDKMDVVRGIVEGKAELEALSLKIGDIGIDVCAAERQDVGVCNNKVEASSAFTVVSGDIGQIEPSKSSLTVVSIDITLKAVYTSILPPDINCTTGTPCLHGGTCHNAVPKGIICECGRDYLGPECQSTTRTFRGNSYLWLDKLASYERSSISLQFMTGSANGLLLYQGPLYNGANNGLPDSIALYLVDGFAKLVIALGPHPMTPLELYMNKGDRLDDRTWHTVQVIRERKKVVLRIDKCSYSKIVEDYGQIVEDRSSCEIKGEIWGSAIYLNGFGPLQIGGVENSISDMKINFTGFSGCIRNIYNNGRMYDLFNPLKEVNTELGCRLNNQCPNCNGRGYCEPFWNYAICVCDLGFGGANCDSRTQANWYRANSFTQYRVKQVKRKRRELVPAPVSMANEFYTNIALQVRVSPNSSNVVIFLASNSLGTEFNRIDVKNHVLRYAFRLGDRMKILKIPQLNVTDDKYHTVIVKREGNRASLQIDYRGKVEGTTGGLHKLLNMGGGSFFTGGLPNITEVRVVEAFVNSGGNAVLRTAEGNIISSGMGSAYTGIGSYMSNVITVNNFGGVDVSYGVSGAPHVQRTIKTKSSIFTGSSGVITRISVSRGHSVEFMNSRFFTRKTKQKQKVIISSSGGSVSGGSGGASGGSGGASGSGGSVGVSGGGGASVGGSILGSSASMDTKGNLRSYGSGFGTWTIAGAGPNEAGDVQVIGDFGGCTASNSYNGLDLDSHPTIEARRQNVEFPCPCGSNFCRHGGTCVSADPPYCLCPVGWSGPVCESIVKDPRPGQRPSSRWANPAVIACILVILLAILVIIGAVLLKRRPQPAVVAVVEDGHVHDNVRPYHDEGAGEEDNFGYDISTLMKYTYVENGVAGTGGVGHGKFKNGGSSGEEEFTATETKPLLQGAMPDDDLHFKTTTITKRKVVHPDSIDVKQFIDTRASEADGEYILSIDELHIYRYEGDDSDVDDLSELGDSDEEPDEEEEQEFAFLQDWGKKFDNLNRIFNEDE.

The signal sequence occupies residues 1-22 (MRGINAIVGFLLCFCLLHRINT). Cadherin domains follow at residues 23–128 (AVQF…SPTF), 129–238 (PQHL…SPVF), 239–350 (EKKS…VPVF), 351–455 (QEES…TPVF), 459–566 (NPQQ…NPDF), 567–664 (SKVV…PPTF), 665–764 (KNAP…PPTF), 765–884 (SRSS…SPEF), 885–994 (SQTS…PPLF), 1092–1197 (EAQP…QPRF), 1290–1395 (SRTV…SPKF), 1396–1499 (SADS…PPKF), 1495–1597 (GPPK…EPQF), 1601–1701 (SNGF…QPVR), 1793–1891 (TMID…KPQF), 1892–1992 (SESA…YPKF), 1993–2100 (EPNL…KPQF), 2101–2202 (LESD…RPVF), 2203–2312 (TDCP…FPFF), 2313–2423 (LTRT…PPAF), 2425–2529 (PSAV…TPTF), 2530–2639 (KLEE…PPIF), 2640–2746 (PKPS…IPKF), 2747–2849 (DNLI…SPYF), 2850–2954 (PNPP…APVF), 2955–3062 (NPRE…PPVF), 3063–3170 (VPAE…GPWF), and 3173–3288 (RYYE…EPFD). Residues 23-4258 (AVQFKQEILE…RPSSRWANPA (4236 aa)) are Extracellular-facing. The EGF-like 1 domain occupies 3551–3589 (PDINCTTGTPCLHGGTCHNAVPKGIICECGRDYLGPECQ). 7 cysteine pairs are disulfide-bonded: C3555/C3567, C3561/C3577, C3579/C3588, C3762/C3788, C3794/C3803, C3797/C3812, and C3814/C3823. A Laminin G-like 1 domain is found at 3590-3788 (STTRTFRGNS…LKEVNTELGC (199 aa)). Residues 3790–3824 (LNNQCPNCNGRGYCEPFWNYAICVCDLGFGGANCD) form the EGF-like 2 domain. The 255-residue stretch at 3842–4096 (VKQVKRKRRE…KVIISSSGGS (255 aa)) folds into the Laminin G-like 2 domain. The disordered stretch occupies residues 4089–4118 (IISSSGGSVSGGSGGASGGSGGASGSGGSV). Gly residues predominate over residues 4096–4118 (SVSGGSGGASGGSGGASGSGGSV). Residues 4206-4238 (PCGSNFCRHGGTCVSADPPYCLCPVGWSGPVCE) enclose the EGF-like 3 domain. Disulfide bonds link C4207–C4218, C4212–C4226, and C4228–C4237. The helical transmembrane segment at 4259 to 4279 (VIACILVILLAILVIIGAVLL) threads the bilayer. The Cytoplasmic portion of the chain corresponds to 4280–4467 (KRRPQPAVVA…NLNRIFNEDE (188 aa)). The tract at residues 4424 to 4445 (DVDDLSELGDSDEEPDEEEEQE) is disordered.

As to expression, component of the acid-insoluble organic matrix of the aragonitic skeleton (at protein level).

Its subcellular location is the membrane. This chain is Protocadherin-like protein, found in Acropora millepora (Staghorn coral).